The sequence spans 224 residues: Ribonuclease 3 (224 aa).

An RNase III domain is found at 5 to 127 (LERLCRRLNY…ILAAIYLDGG (123 aa)). Glutamate 40 lines the Mg(2+) pocket. Residue aspartate 44 is part of the active site. Mg(2+) is bound by residues aspartate 113 and glutamate 116. Residue glutamate 116 is part of the active site. The DRBM domain maps to 154–224 (DAKTQLQEFL…AKAMLEQLQG (71 aa)).

The protein belongs to the ribonuclease III family. As to quaternary structure, homodimer. The cofactor is Mg(2+).

Its subcellular location is the cytoplasm. It catalyses the reaction Endonucleolytic cleavage to 5'-phosphomonoester.. In terms of biological role, digests double-stranded RNA. Involved in the processing of primary rRNA transcript to yield the immediate precursors to the large and small rRNAs (23S and 16S). Processes some mRNAs, and tRNAs when they are encoded in the rRNA operon. Processes pre-crRNA and tracrRNA of type II CRISPR loci if present in the organism. The polypeptide is Ribonuclease 3 (Legionella pneumophila (strain Lens)).